The primary structure comprises 252 residues: Large ribosomal subunit protein uL4 (252 aa).

The protein belongs to the universal ribosomal protein uL4 family. Part of the 50S ribosomal subunit.

Its function is as follows. One of the primary rRNA binding proteins, this protein initially binds near the 5'-end of the 23S rRNA. It is important during the early stages of 50S assembly. It makes multiple contacts with different domains of the 23S rRNA in the assembled 50S subunit and ribosome. In terms of biological role, forms part of the polypeptide exit tunnel. This is Large ribosomal subunit protein uL4 from Methanococcus maripaludis (strain DSM 14266 / JCM 13030 / NBRC 101832 / S2 / LL).